The sequence spans 555 residues: Synaptotagmin-14 (555 aa).

The Extracellular segment spans residues 1-24 (MAIEGGERTCGVHELICIRKVSPE). A helical; Signal-anchor for type III membrane protein transmembrane segment spans residues 25-47 (AVGFLSAVGVFIILMLLLFLYIN). Residues 48–555 (KKFCFENVGG…VCRWHALLES (508 aa)) are Cytoplasmic-facing. Disordered regions lie at residues 157 to 179 (TPPLDELQPPPYQDDSGSPHLSC) and 222 to 257 (GYEEDVPSDSTAVLSPEDMSAQGSSSQLPKPFDPEP). C2 domains are found at residues 260-379 (KYGT…SLPV) and 415-550 (SVPE…CRWH).

This sequence belongs to the synaptotagmin family. In terms of assembly, homodimer. Can also form heterodimers. In terms of tissue distribution, highly expressed in fetal and adult brain tissue.

The protein localises to the membrane. May be involved in the trafficking and exocytosis of secretory vesicles in non-neuronal tissues. Is Ca(2+)-independent. This chain is Synaptotagmin-14 (SYT14), found in Homo sapiens (Human).